Here is a 619-residue protein sequence, read N- to C-terminus: MPIQVLPPQLANQIAAGEVVERPASVVKELVENSLDAGATRIDIDIERGGAKLIRIRDNGCGIKKDELALALARHATSKIASLDDLEAIISLGFRGEALASISSVSRLTLTSRTAEQAEAWQAYAEGRDMDVTVKPAAHPVGTTLEVLDLFYNTPARRKFMRTEKTEFNHIDEIIRRIALARFDVTLNLSHNGKMVRQYRAVAQDGQKERRLGALCGAPFLEQALVIEWQHGDLTLRGWVADPHHTTAALAEIQYCYVNGRMMRDRLINHAIRQACEDKLGGDRQPAFVLYLEIDPHQVDVNVHPAKHEVRFHQSRLVHDFIYQGVLSVLQQQLDAPLPLAEEAPAPRHIPENRVAAGRNHFAEPASAREPAAPRYSTSSGATGGRQPAASWPHAQPGYQKQQGEVYRQLLQTPAPRQPALAPEAETAAPSLAGHSQSFGRVLTIVGADCALLERDGNIHLLALPVAERWLRQAQLTPGQTPVCAQPLLIPLRLKVSAEEKSALEKAQTPLTDLGIEFQSDAQHVTIRAVPLPLRQQNLQILIPELIGYLAQQSAFDAGNIAQWIARNLMSEHPQWTMAQAITLLADVERLCPQLVKAPPGGLLQPVDLHSVMNALKHE.

The segment covering 364 to 375 (EPASAREPAAPR) has biased composition (low complexity). Positions 364–399 (EPASAREPAAPRYSTSSGATGGRQPAASWPHAQPGY) are disordered.

The protein belongs to the DNA mismatch repair MutL/HexB family.

Its function is as follows. This protein is involved in the repair of mismatches in DNA. It is required for dam-dependent methyl-directed DNA mismatch repair. May act as a 'molecular matchmaker', a protein that promotes the formation of a stable complex between two or more DNA-binding proteins in an ATP-dependent manner without itself being part of a final effector complex. The polypeptide is DNA mismatch repair protein MutL (Citrobacter koseri (strain ATCC BAA-895 / CDC 4225-83 / SGSC4696)).